We begin with the raw amino-acid sequence, 314 residues long: Ribosomal RNA small subunit methyltransferase H (314 aa).

S-adenosyl-L-methionine-binding positions include 31 to 33 (GGY), D49, F76, D118, and Q125.

This sequence belongs to the methyltransferase superfamily. RsmH family.

Its subcellular location is the cytoplasm. The catalysed reaction is cytidine(1402) in 16S rRNA + S-adenosyl-L-methionine = N(4)-methylcytidine(1402) in 16S rRNA + S-adenosyl-L-homocysteine + H(+). Its function is as follows. Specifically methylates the N4 position of cytidine in position 1402 (C1402) of 16S rRNA. The chain is Ribosomal RNA small subunit methyltransferase H from Wolbachia pipientis wMel.